The sequence spans 339 residues: Protein-glutamate methylesterase/protein-glutamine glutaminase 3 (339 aa).

The Response regulatory domain maps to 2-119; it reads NIGIVNDLPL…GLSTDASPQA (118 aa). 4-aspartylphosphate is present on Asp53. The 196-residue stretch at 141–336 folds into the CheB-type methylesterase domain; the sequence is PGPAPTRGQP…PQLIARIALT (196 aa). Residues Ser158, His185, and Asp278 contribute to the active site.

It belongs to the CheB family. Phosphorylated by CheA. Phosphorylation of the N-terminal regulatory domain activates the methylesterase activity.

The protein resides in the cytoplasm. The catalysed reaction is [protein]-L-glutamate 5-O-methyl ester + H2O = L-glutamyl-[protein] + methanol + H(+). It catalyses the reaction L-glutaminyl-[protein] + H2O = L-glutamyl-[protein] + NH4(+). Its function is as follows. Involved in chemotaxis. Part of a chemotaxis signal transduction system that modulates chemotaxis in response to various stimuli. Catalyzes the demethylation of specific methylglutamate residues introduced into the chemoreceptors (methyl-accepting chemotaxis proteins or MCP) by CheR. Also mediates the irreversible deamidation of specific glutamine residues to glutamic acid. The protein is Protein-glutamate methylesterase/protein-glutamine glutaminase 3 of Burkholderia orbicola (strain AU 1054).